The sequence spans 2531 residues: Serine/threonine-protein kinase ATR (2531 aa).

The 578-residue stretch at 1490 to 2067 (LIVKVAETFG…MWQSAYLLRQ (578 aa)) folds into the FAT domain. The region spanning 2192–2512 (FSDKVKVLHS…VSQLASSLIE (321 aa)) is the PI3K/PI4K catalytic domain. The G-loop stretch occupies residues 2198–2204 (VLHSNTK). The tract at residues 2368-2376 (GLGDRHTKN) is catalytic loop. An activation loop region spans residues 2387 to 2411 (HVDFDMIFNKGETLGTPELVPFRLT). An FATC domain is found at 2499–2531 (HPMQVSQLASSLIELATSEEKLSEMYLGWMATL).

Belongs to the PI3/PI4-kinase family. ATM subfamily. The cofactor is Mn(2+).

It localises to the nucleus. It carries out the reaction L-seryl-[protein] + ATP = O-phospho-L-seryl-[protein] + ADP + H(+). The enzyme catalyses L-threonyl-[protein] + ATP = O-phospho-L-threonyl-[protein] + ADP + H(+). In terms of biological role, serine/threonine protein kinase which activates checkpoint signaling upon genotoxic stresses such as ionizing radiation (IR), ultraviolet light (UV), or DNA replication stalling, thereby acting as a DNA damage sensor. Recognizes the substrate consensus sequence [ST]-Q. Phosphorylates various proteins, which collectively inhibits DNA replication and mitosis and promotes DNA repair and recombination. Prevents mitotic catastrophe by functioning in the S-phase checkpoint and cooperating with atm-1 in the checkpoint response to double-strand breaks (DSBs) after ionizing radiation (IR) to induce cell cycle arrest or apoptosis via the cep-1/p53 pathway. In response to ionizing radiation, probably required for the association between the brc-1-brd-1 heterodimer and rad-51 and let-70 in order to activate E3-ubiquitin ligase activity of the heterodimer and induce ubiquitination at DNA damage sites. In Caenorhabditis elegans, this protein is Serine/threonine-protein kinase ATR.